A 1056-amino-acid chain; its full sequence is Ribosomal protein S6 kinase delta-1 (1056 aa).

In terms of domain architecture, PX spans 8-132 (SADLARFYTV…DFFKGGVISD (125 aa)). The disordered stretch occupies residues 204-223 (VGAVASDSEPSRVEDRESRS). Over residues 212–222 (EPSRVEDRESR) the composition is skewed to basic and acidic residues. The 29-residue stretch at 276–304 (VQGESSPTRREAVKRRTAEYLMRAESICS) folds into the MIT domain. A phosphoserine mark is found at Ser281, Ser422, Ser423, Ser426, Ser446, Ser448, and Ser454. The region spanning 343–444 (GVIDKVLLVM…SMPPRVCLQQ (102 aa)) is the Protein kinase 1 domain. A disordered region spans residues 426 to 504 (SLDIKEGRPS…KWLDSGSSSE (79 aa)). Positions 443-454 (QQPSASPQGGSS) are enriched in low complexity. Over residues 473-482 (TSLTPSSQDD) the composition is skewed to polar residues. Phosphoserine occurs at positions 493 and 527. The interval 529-588 (SEESVMQPEGDKADTQAVSSPASLATGSVSPSTHLRVFSGGEDLEAVSSPPTSESLSRSK) is disordered. A compositionally biased stretch (polar residues) spans 544 to 561 (QAVSSPASLATGSVSPST). A compositionally biased stretch (low complexity) spans 576–587 (SSPPTSESLSRS). Phosphoserine is present on residues Ser577, Ser599, Ser602, Ser634, Ser655, Ser658, Ser661, and Ser787. The segment at 628–662 (TLEDGDSPSQSLDPGESKRESEAQDSVSRGSDDSV) is disordered. The 258-residue stretch at 789-1046 (RSESDRLGQV…VEDIKSHPFF (258 aa)) folds into the Protein kinase 2 domain. ATP-binding positions include 795 to 803 (LGQVEVVVT) and Lys823. Asp919 functions as the Proton acceptor in the catalytic mechanism.

The protein belongs to the protein kinase superfamily. Ser/Thr protein kinase family. S6 kinase subfamily. As to quaternary structure, interacts with SPHK1 and phosphatidylinositol 3-phosphate. Interacts (via PX domain) with PRDX3.

It is found in the cytoplasm. It localises to the membrane. The protein resides in the early endosome. The enzyme catalyses L-seryl-[protein] + ATP = O-phospho-L-seryl-[protein] + ADP + H(+). It carries out the reaction L-threonyl-[protein] + ATP = O-phospho-L-threonyl-[protein] + ADP + H(+). Functionally, may be involved in transmitting sphingosine-1 phosphate (SPP)-mediated signaling into the cell. Plays a role in the recruitment of PRDX3 to early endosomes. The sequence is that of Ribosomal protein S6 kinase delta-1 (Rps6kc1) from Mus musculus (Mouse).